Reading from the N-terminus, the 911-residue chain is FIGNL1-interacting regulator of recombination and mitosis (911 aa).

Positions 830–853 (SEKSQPAQTPLTEEPCAKRARQET) are disordered. A compositionally biased stretch (basic and acidic residues) spans 844–853 (PCAKRARQET).

The protein localises to the chromosome. It localises to the centromere. Its subcellular location is the kinetochore. The protein resides in the nucleus. It is found in the midbody. The protein localises to the cytoplasm. It localises to the cytoskeleton. Its subcellular location is the spindle. In terms of biological role, may play a role in chromosome segregation. The chain is FIGNL1-interacting regulator of recombination and mitosis from Danio rerio (Zebrafish).